A 679-amino-acid chain; its full sequence is Methyl-accepting chemotaxis protein McpB (679 aa).

Divergent domain HAMP stretches follow at residues 8 to 56 (AVAQ…RQLR), 63 to 112 (QQVE…AAHI), and 111 to 156 (HIAV…ERLR). The 43-residue stretch at 171 to 213 (YNARIKSALDNVSANVMIADNDLNIIYMNRTVSEMLGRAEADI) folds into the PAS domain. Residue His-234 coordinates heme. The short motif at 285–287 (DRT) is the DxT. Important for signal propagation element. A divergent domain HAMP 4 region spans residues 289–332 (EHRAEQEVSQLVQAAAAGDFSKRVEEAGKEGFFLRLAKDLNSLV). Residues 333-385 (DTADRGLRDVSRMLGALAQGDLTQRIEADYQGTFGQLKDFSNDTAQSLSRMLG) enclose the HAMP 5 domain. The Methyl-accepting transducer domain occupies 390–619 (AADTINTAAS…EAAAAAEAMQ (230 aa)). Disordered regions lie at residues 405 to 425 (NAEL…TASS) and 644 to 679 (ASAR…WEEF). A compositionally biased stretch (polar residues) spans 411–425 (RTEQQASSLEETASS). The segment covering 670–679 (ARKEDGWEEF) has biased composition (basic and acidic residues). The GWEEF pentapeptide. Important for methylation by CheR2 signature appears at 675 to 679 (GWEEF).

The protein belongs to the methyl-accepting chemotaxis (MCP) protein family. In terms of assembly, homodimer. The PAS domains form dimers in the presence and absence of oxygen. Interacts with the methyltransferase CheR2 via the C-terminal McpB pentapeptide GWEEF. Interacts with the methylesterase/gutaminase CheB2, which also binds to the GWEEF pentapeptide. Methylated by CheR2, but not by CheR1, CheR3 or WspC. Demethylated by CheB2. In vitro, can be methylated by E.coli CheR.

Its subcellular location is the cytoplasm. Its function is as follows. Chemoreceptor that plays a critical role in the virulence and pathogenesis of P.aeruginosa in a variety of hosts. Probably acts through oxygen sensing. Uses a heme-based sensor. Could be involved in chemotaxis. When expressed in E.coli, is able to sense and mediate repellent responses to oxygen, carbon monoxide and nitric oxide. The polypeptide is Methyl-accepting chemotaxis protein McpB (Pseudomonas aeruginosa (strain ATCC 15692 / DSM 22644 / CIP 104116 / JCM 14847 / LMG 12228 / 1C / PRS 101 / PAO1)).